A 408-amino-acid chain; its full sequence is MNDTVKKPTGGRGDDPLPAGAALSAVAPHEPVSVVLAGGGTAGHVEPAMAVADALKALDPHVRITALGTARGLETRLVPERGYDLELITPVPLPRKPTGDLARLPSRVWRAVRETRAVLHAVDADVVIGFGGYVALPAYLAARGVSPRKPRVPVVIHEANASAGLANRVGARTAQRVLSAVPDCGLPGAEVVGVPVREAITSLDRAALRAEARRHFGFADDARVLLVFGGSQGAASLNRAVSGAAAQLAAAGVSVLHAHGPKNTLDLREPQPGDPPYVAVPYLDRMDLAYAAADLVICRSGAMTVAEVSAVGLPAIYVPLPIGNGEQRLNALPVVDAGGGMVVADADLTPELVAREVAGLVGDPPRLAAMTTAAARVGHPDAARRVAQAALDIGRTARLARGATGGRP.

Positions 1 to 20 (MNDTVKKPTGGRGDDPLPAG) are disordered. Residues 41–43 (TAG), N160, R197, S231, and Q327 contribute to the UDP-N-acetyl-alpha-D-glucosamine site.

The protein belongs to the glycosyltransferase 28 family. MurG subfamily.

The protein localises to the cell membrane. It catalyses the reaction di-trans,octa-cis-undecaprenyl diphospho-N-acetyl-alpha-D-muramoyl-L-alanyl-D-glutamyl-meso-2,6-diaminopimeloyl-D-alanyl-D-alanine + UDP-N-acetyl-alpha-D-glucosamine = di-trans,octa-cis-undecaprenyl diphospho-[N-acetyl-alpha-D-glucosaminyl-(1-&gt;4)]-N-acetyl-alpha-D-muramoyl-L-alanyl-D-glutamyl-meso-2,6-diaminopimeloyl-D-alanyl-D-alanine + UDP + H(+). The protein operates within cell wall biogenesis; peptidoglycan biosynthesis. Its function is as follows. Cell wall formation. Catalyzes the transfer of a GlcNAc subunit on undecaprenyl-pyrophosphoryl-MurNAc-pentapeptide (lipid intermediate I) to form undecaprenyl-pyrophosphoryl-MurNAc-(pentapeptide)GlcNAc (lipid intermediate II). This is UDP-N-acetylglucosamine--N-acetylmuramyl-(pentapeptide) pyrophosphoryl-undecaprenol N-acetylglucosamine transferase from Mycolicibacterium paratuberculosis (strain ATCC BAA-968 / K-10) (Mycobacterium paratuberculosis).